A 227-amino-acid chain; its full sequence is YEATS domain-containing protein 4 (227 aa).

The YEATS domain maps to 15–158; that stretch reads RVKGVTIVKP…AMMQQLLTTS (144 aa). Lysine 37 participates in a covalent cross-link: Glycyl lysine isopeptide (Lys-Gly) (interchain with G-Cter in SUMO2). A diacetylated histone H3 binding region spans residues 93-97; that stretch reads WGEFE. Positions 163 to 227 are interaction with MLLT10; the sequence is LGAYKHETEF…LEEDDQTKDI (65 aa). Residues 168-227 form an interaction with TACC1 region; it reads HETEFAELEVKTREKLEAAKKKTSFEIAELKERLKASRETINCLKNEIRKLEEDDQTKDI. Positions 178 to 226 form a coiled coil; it reads KTREKLEAAKKKTSFEIAELKERLKASRETINCLKNEIRKLEEDDQTKD.

Component of numerous complexes with chromatin remodeling and histone acetyltransferase activity. Component of the NuA4 histone acetyltransferase complex which contains the catalytic subunit KAT5/TIP60 and the subunits EP400, TRRAP/PAF400, BRD8/SMAP, EPC1, DMAP1/DNMAP1, RUVBL1/TIP49, RUVBL2, ING3, actin, ACTL6A/BAF53A, MORF4L1/MRG15, MORF4L2/MRGX, MRGBP, YEATS4/GAS41, VPS72/YL1 and MEAF6. The NuA4 complex interacts with MYC and the adenovirus E1A protein. Component of a NuA4-related complex which contains EP400, TRRAP/PAF400, SRCAP, BRD8/SMAP, EPC1, DMAP1/DNMAP1, RUVBL1/TIP49, RUVBL2, actin, ACTL6A/BAF53A, VPS72 and YEATS4/GAS41. Interacts with MLLT10/AF10. Also interacts with the SWI/SNF component SMARCB1/BAF47, TACC1 and TACC2, and the nuclear matrix protein NUMA1.

The protein localises to the nucleus. Its function is as follows. Chromatin reader component of the NuA4 histone acetyltransferase (HAT) complex, a complex involved in transcriptional activation of select genes principally by acetylation of nucleosomal histones H4 and H2A. Specifically recognizes and binds acylated histone H3, with a preference for histone H3 diacetylated at 'Lys-18' and 'Lys-27' (H3K18ac and H3K27ac) or histone H3 diacetylated at 'Lys-14' and 'Lys-27' (H3K14ac and H3K27ac). Also able to recognize and bind crotonylated histone H3. May also recognize and bind histone H3 succinylated at 'Lys-122' (H3K122succ); additional evidences are however required to confirm this result in vivo. Plays a key role in histone variant H2AZ1/H2A.Z deposition into specific chromatin regions: recognizes and binds H3K14ac and H3K27ac on the promoters of actively transcribed genes and recruits NuA4-related complex to deposit H2AZ1/H2A.Z. H2AZ1/H2A.Z deposition is required for maintenance of embryonic stem cell. This Mus musculus (Mouse) protein is YEATS domain-containing protein 4.